The chain runs to 330 residues: Pantothenate kinase (330 aa).

Residue 108-115 (GSVAVGKS) participates in ATP binding.

Belongs to the prokaryotic pantothenate kinase family.

It is found in the cytoplasm. The catalysed reaction is (R)-pantothenate + ATP = (R)-4'-phosphopantothenate + ADP + H(+). It participates in cofactor biosynthesis; coenzyme A biosynthesis; CoA from (R)-pantothenate: step 1/5. The chain is Pantothenate kinase from Allorhizobium ampelinum (strain ATCC BAA-846 / DSM 112012 / S4) (Agrobacterium vitis (strain S4)).